We begin with the raw amino-acid sequence, 404 residues long: Cysteine desulfurase IscS (404 aa).

Residues 75–76 (AT), N155, Q183, and 203–205 (SAH) each bind pyridoxal 5'-phosphate. K206 is modified (N6-(pyridoxal phosphate)lysine). Residue T243 coordinates pyridoxal 5'-phosphate. Residue C328 is the Cysteine persulfide intermediate of the active site. C328 contacts [2Fe-2S] cluster.

Belongs to the class-V pyridoxal-phosphate-dependent aminotransferase family. NifS/IscS subfamily. As to quaternary structure, homodimer. Forms a heterotetramer with IscU, interacts with other sulfur acceptors. The cofactor is pyridoxal 5'-phosphate.

It localises to the cytoplasm. It carries out the reaction (sulfur carrier)-H + L-cysteine = (sulfur carrier)-SH + L-alanine. Its pathway is cofactor biosynthesis; iron-sulfur cluster biosynthesis. Master enzyme that delivers sulfur to a number of partners involved in Fe-S cluster assembly, tRNA modification or cofactor biosynthesis. Catalyzes the removal of elemental sulfur atoms from cysteine to produce alanine. Functions as a sulfur delivery protein for Fe-S cluster synthesis onto IscU, an Fe-S scaffold assembly protein, as well as other S acceptor proteins. This Ectopseudomonas mendocina (strain ymp) (Pseudomonas mendocina) protein is Cysteine desulfurase IscS.